Reading from the N-terminus, the 272-residue chain is Phosphate import ATP-binding protein PstB (272 aa).

The ABC transporter domain maps to 26–267 (LEIRNLDLRY…PKKRKTEDYI (242 aa)). 58–65 (GPSGCGKS) lines the ATP pocket.

Belongs to the ABC transporter superfamily. Phosphate importer (TC 3.A.1.7) family. In terms of assembly, the complex is composed of two ATP-binding proteins (PstB), two transmembrane proteins (PstC and PstA) and a solute-binding protein (PstS).

It localises to the cell inner membrane. It carries out the reaction phosphate(out) + ATP + H2O = ADP + 2 phosphate(in) + H(+). Functionally, part of the ABC transporter complex PstSACB involved in phosphate import. Responsible for energy coupling to the transport system. This is Phosphate import ATP-binding protein PstB from Shewanella frigidimarina (strain NCIMB 400).